The sequence spans 288 residues: 3-methyl-2-oxobutanoate hydroxymethyltransferase (288 aa).

Mg(2+) contacts are provided by D48 and D87. Residues 48–49, D87, and K116 each bind 3-methyl-2-oxobutanoate; that span reads DS. E118 contributes to the Mg(2+) binding site. E185 (proton acceptor) is an active-site residue.

The protein belongs to the PanB family. Homodecamer; pentamer of dimers. Requires Mg(2+) as cofactor.

It localises to the cytoplasm. It catalyses the reaction 3-methyl-2-oxobutanoate + (6R)-5,10-methylene-5,6,7,8-tetrahydrofolate + H2O = 2-dehydropantoate + (6S)-5,6,7,8-tetrahydrofolate. It participates in cofactor biosynthesis; coenzyme A biosynthesis. Functionally, catalyzes the reversible reaction in which hydroxymethyl group from 5,10-methylenetetrahydrofolate is transferred onto alpha-ketoisovalerate to form ketopantoate. The sequence is that of 3-methyl-2-oxobutanoate hydroxymethyltransferase from Hyperthermus butylicus (strain DSM 5456 / JCM 9403 / PLM1-5).